The primary structure comprises 555 residues: La-related protein 7 (555 aa).

The HTH La-type RNA-binding domain occupies 36-127 (RSRVKQLLSD…RRKEPLGETP (92 aa)). Residues 133-211 (RTVYVELLPK…PRKPGIFPKT (79 aa)) enclose the RRM domain. Residues 218–327 (PFDAVTQDND…ENKDEELNSL (110 aa)) form a disordered region. Composition is skewed to polar residues over residues 238 to 251 (KNST…NNMD), 258 to 274 (STVT…STVS), and 284 to 293 (SQSFEASSGE). A coiled-coil region spans residues 295-356 (QFEMSSKMRK…ERLKVGEEVI (62 aa)). Residues 303–327 (RKVEEEKSELKDLSSENKDEELNSL) are compositionally biased toward basic and acidic residues. Residues 425–538 (EFLSGVIVKI…TEKLISKAEK (114 aa)) enclose the xRRM domain.

Belongs to the LARP7 family. As to quaternary structure, core component of the 7SK RNP complex. Associates with box C/D small nucleolar ribonucleoprotein (snoRNP) complexes.

It is found in the nucleus. It localises to the nucleoplasm. In terms of biological role, RNA-binding protein that specifically binds distinct small nuclear RNA (snRNAs) and regulates their processing and function. Specifically binds the 7SK snRNA (7SK RNA) and acts as a core component of the 7SK ribonucleoprotein (RNP) complex, thereby acting as a negative regulator of transcription elongation by RNA polymerase II. The 7SK RNP complex sequesters the positive transcription elongation factor b (P-TEFb) in a large inactive 7SK RNP complex preventing RNA polymerase II phosphorylation and subsequent transcriptional elongation. The 7SK RNP complex also promotes snRNA gene transcription by RNA polymerase II via interaction with the little elongation complex (LEC). LARP7 specifically binds to the highly conserved 3'-terminal U-rich stretch of 7SK RNA; on stimulation, remains associated with 7SK RNA, whereas P-TEFb is released from the complex. LARP7 also acts as a regulator of mRNA splicing fidelity by promoting U6 snRNA processing. Specifically binds U6 snRNAs and associates with a subset of box C/D RNP complexes: promotes U6 snRNA 2'-O-methylation by facilitating U6 snRNA loading into box C/D RNP complexes. U6 snRNA 2'-O-methylation is required for mRNA splicing fidelity. The protein is La-related protein 7 of Danio rerio (Zebrafish).